Consider the following 182-residue polypeptide: Small ribosomal subunit protein uS4c (182 aa).

The interval 13–34 is disordered; the sequence is GLTSKRPRSGSDPKNQLRSGKR. Residues 82 to 143 enclose the S4 RNA-binding domain; that stretch reads MRLDNILFRL…KQRSKALIQN (62 aa).

The protein belongs to the universal ribosomal protein uS4 family. Part of the 30S ribosomal subunit. Contacts protein S5. The interaction surface between S4 and S5 is involved in control of translational fidelity.

It is found in the plastid. Its subcellular location is the chloroplast. One of the primary rRNA binding proteins, it binds directly to 16S rRNA where it nucleates assembly of the body of the 30S subunit. Functionally, with S5 and S12 plays an important role in translational accuracy. The protein is Small ribosomal subunit protein uS4c (rps4) of Iris lutescens (Crimean iris).